Reading from the N-terminus, the 195-residue chain is Exosome complex component CSL4 (195 aa).

Phosphoserine occurs at positions 21 and 98. In terms of domain architecture, S1 motif spans 66 to 147; it reads DVGAIVTCKV…AQSNYLLTTA (82 aa).

Belongs to the CSL4 family. Component of the RNA exosome core complex (Exo-9), composed of EXOSC1, EXOSC2, EXOSC3, EXOSC4, EXOSC5, EXOSC6, EXOSC7, EXOSC8 and EXOSC9; within the complex interacts with EXOSC6. The catalytically inactive RNA exosome core complex (Exo-9) associates with the catalytic subunit EXOSC10/RRP6. Exo-9 may associate with DIS3 to form the nucleolar exosome complex, or DIS3L to form the cytoplasmic exosome complex. Exo-9 is formed by a hexameric base ring consisting of the heterodimers EXOSC4-EXOSC9, EXOSC5-EXOSC8 and EXOSC6-EXOSC7, and a cap ring consisting of EXOSC1, EXOSC2 and EXOSC3. The RNA exosome complex associates with cofactors C1D/RRP47, MPHOSPH6/MPP6 and MTREX/MTR4. Interacts with DDX60.

It localises to the nucleus. The protein resides in the nucleolus. It is found in the cytoplasm. Non-catalytic component of the RNA exosome complex which has 3'-&gt;5' exoribonuclease activity and participates in a multitude of cellular RNA processing and degradation events. In the nucleus, the RNA exosome complex is involved in proper maturation of stable RNA species such as rRNA, snRNA and snoRNA, in the elimination of RNA processing by-products and non-coding 'pervasive' transcripts, such as antisense RNA species and promoter-upstream transcripts (PROMPTs), and of mRNAs with processing defects, thereby limiting or excluding their export to the cytoplasm. The RNA exosome may be involved in Ig class switch recombination (CSR) and/or Ig variable region somatic hypermutation (SHM) by targeting AICDA deamination activity to transcribed dsDNA substrates. In the cytoplasm, the RNA exosome complex is involved in general mRNA turnover and specifically degrades inherently unstable mRNAs containing AU-rich elements (AREs) within their 3' untranslated regions, and in RNA surveillance pathways, preventing translation of aberrant mRNAs. It seems to be involved in degradation of histone mRNA. The catalytic inactive RNA exosome core complex of 9 subunits (Exo-9) is proposed to play a pivotal role in the binding and presentation of RNA for ribonucleolysis, and to serve as a scaffold for the association with catalytic subunits and accessory proteins or complexes. EXOSC1 as peripheral part of the Exo-9 complex stabilizes the hexameric ring of RNase PH-domain subunits through contacts with EXOSC6 and EXOSC8. This chain is Exosome complex component CSL4 (EXOSC1), found in Homo sapiens (Human).